The sequence spans 513 residues: Histone acetyltransferase KAT5 (513 aa).

The Tudor-knot domain maps to 8–65 (IEGCRLPVLRRNQDNEDEWPLAEILSVKDISGRKLFYVHYIDFNKRLDEWVTHERLDL). An N6-acetyllysine modification is found at Lys-52. The interval 69–106 (QFPKKEAKTPTKNGLPGSRPGSPEREVPASAQASGKTL) is disordered. Ser-86 bears the Phosphoserine; by GSK3 mark. Position 90 is a phosphoserine; by CDK1 and CDK9 (Ser-90). N6-acetyllysine; by autocatalysis occurs at positions 104 and 120. A disordered region spans residues 122-220 (REAIPGGEPD…RMTGSLVSDR (99 aa)). The segment covering 133-144 (PLSSSSCLQPNH) has biased composition (polar residues). N6-acetyllysine; by autocatalysis is present on residues Lys-148, Lys-150, Lys-187, and Lys-189. Ser-199 is modified (phosphoserine). Positions 227–504 (TRMKNIECIE…IDSKCLHFTP (278 aa)) constitute an MYST-type HAT domain. Residues 260 to 285 (LYLCEFCLKYGRSLKCLQRHLTKCDL) form a C2HC MYST-type zinc finger. N6-acetyllysine; by autocatalysis is present on Lys-327. The interval 368 to 513 (ACILTLPPYQ…PKDWSKRGKW (146 aa)) is interaction with ATF2. Acetyl-CoA is bound by residues 370–372 (ILT) and 377–383 (QRRGYGK). Catalysis depends on Glu-403, which acts as the Proton donor/acceptor. Acetyl-CoA is bound by residues Ser-407 and Ser-416. Lys-430 participates in a covalent cross-link: Glycyl lysine isopeptide (Lys-Gly) (interchain with G-Cter in SUMO1); alternate. Residue Lys-430 forms a Glycyl lysine isopeptide (Lys-Gly) (interchain with G-Cter in SUMO2); alternate linkage. Lys-451 participates in a covalent cross-link: Glycyl lysine isopeptide (Lys-Gly) (interchain with G-Cter in SUMO1).

It belongs to the MYST (SAS/MOZ) family. As to quaternary structure, component of the NuA4 histone acetyltransferase complex which contains the catalytic subunit KAT5/TIP60 and the subunits EP400, TRRAP/PAF400, BRD8/SMAP, EPC1, DMAP1/DNMAP1, RUVBL1/TIP49, RUVBL2, ING3, actin, ACTL6A/BAF53A, MORF4L1/MRG15, MORF4L2/MRGX, MRGBP, YEATS4/GAS41, VPS72/YL1 and MEAF6. KAT5/TIP60, EPC1, and ING3 together constitute a minimal HAT complex termed Piccolo NuA4. The NuA4 complex interacts with MYC. Interacts with ATM. Interacts with JADE1. Interacts with PLA2G4A/CPLA2, EDNRA and HDAC7. Interacts with the cytoplasmic tail of APP and APBB1/FE65. Interacts with TRIM24 and TRIM68. Forms a complex with SENP6 and UBE2I in response to UV irradiation. Identified in a complex with HINT1. Interacts with ATF2 and CUL3. Interacts with NR1D2 (via N-terminus). Component of a SWR1-like complex. Interacts with FOXP3. Interacts with ZBTB49. Interacts with SRF. Interacts with ATF3; promoting autoacetylation and deubiquitination by USP7. Interacts with EP300/p300; interaction promotes KAT5 autoacetylation. Interacts with PRKDC; interaction is impaired following KAT5 sumoylation. Interacts with GPR50. Interacts with NME3; this interaction enables recruitment of NME3 at DNA damage sites where it plays a role in the repair of DNA. (Microbial infection) Interacts with HIV-1 TAT. Post-translationally, phosphorylated on Ser-86 and Ser-90; enhanced during G2/M phase. The phosphorylated form has a higher activity. Phosphorylation at Ser-90 by CDK1 or CDK9 is a prerequisite for phosphorylation at Ser-86 by GSK3. Phosphorylation at Ser-86 by GSK3 (GSK3A or GSK3B) activates acetyltransferase and acyltransferase activities. Phosphorylation at Ser-90 by CDK9 promotes KAT5 recruitment to chromatin. Phosphorylation by VRK1 following DNA damage promotes KAT5 association with chromatin and histone acetyltransferase activity. In terms of processing, autoacetylated. Autoacetylation is required for histone acetyltransferase activity. Autoacetylation at Lys-327 is facilitated by interaction with EP300/p300: it prevents ubiquitination and subsequent degradation by the proteasome and promotes acetylation of target proteins. Deacetylated by HDAC3 and SIRT1. Deacetylation by HDAC3 promotes its ubiquitination and cytoplasmic localization. Sumoylated by UBE2I at Lys-430 and Lys-451, leading to increase of its histone acetyltransferase activity in UV-induced DNA damage response, as well as its translocation to nuclear bodies. Sumoylation with SUMO2 by PIAS4 at Lys-430 promotes repair of DNA double-strand breaks (DSBs) via homologous recombination (HR). Sumoylation by PIAS4 impairs interaction with PRKDC, inhibiting non-homologous end joining (NHEJ)-mediated repair of DSBs, thereby facilitating HR. Desumoylated by SENP3. Post-translationally, ubiquitinated by MDM2, leading to its proteasome-dependent degradation. Ubiquitination is prevented by autoacetylation at Lys-327. Ubiquitinated following deacetylation by HDAC3, leading to cytoplasmic localization. Deubiquitinated by USP7 following interaction with ATF3, promoting its stabilization. In terms of processing, (Microbial infection) In case of HIV-1 infection, interaction with the viral Tat protein leads to KAT5 polyubiquitination and targets it to degradation.

Its subcellular location is the nucleus. The protein localises to the chromosome. It localises to the cytoplasm. The protein resides in the centromere. It is found in the kinetochore. Its subcellular location is the cytoskeleton. The protein localises to the spindle pole. It localises to the nucleolus. The protein resides in the perinuclear region. The enzyme catalyses L-lysyl-[histone] + acetyl-CoA = N(6)-acetyl-L-lysyl-[histone] + CoA + H(+). It carries out the reaction L-lysyl-[protein] + acetyl-CoA = N(6)-acetyl-L-lysyl-[protein] + CoA + H(+). It catalyses the reaction (2E)-butenoyl-CoA + L-lysyl-[protein] = N(6)-(2E)-butenoyl-L-lysyl-[protein] + CoA + H(+). The catalysed reaction is 2-hydroxyisobutanoyl-CoA + L-lysyl-[protein] = N(6)-(2-hydroxyisobutanoyl)-L-lysyl-[protein] + CoA + H(+). The enzyme catalyses (S)-lactoyl-CoA + L-lysyl-[protein] = N(6)-[(S)-lactoyl]-L-lysyl-[protein] + CoA + H(+). Acyltransferase and acetyltransferase activities are activated by phosphorylation and autoacetylation. Autoacetylation activates the histone acetyltransferase activity. In terms of biological role, catalytic subunit of the NuA4 histone acetyltransferase complex, a multiprotein complex involved in transcriptional activation of select genes principally by acetylation of nucleosomal histones H2A and H4. Histone acetylation alters nucleosome-DNA interactions and promotes interaction of the modified histones with other proteins which positively regulate transcription. The NuA4 histone acetyltransferase complex is required for the activation of transcriptional programs associated with proto-oncogene mediated growth induction, tumor suppressor mediated growth arrest and replicative senescence, apoptosis, and DNA repair. The NuA4 complex plays a direct role in repair of DNA double-strand breaks (DSBs) by promoting homologous recombination (HR): the complex inhibits TP53BP1 binding to chromatin via MBTD1, which recognizes and binds histone H4 trimethylated at 'Lys-20' (H4K20me), and KAT5 that catalyzes acetylation of 'Lys-15' of histone H2A (H2AK15ac), thereby blocking the ubiquitination mark required for TP53BP1 localization at DNA breaks. Also involved in DSB repair by mediating acetylation of 'Lys-5' of histone H2AX (H2AXK5ac), promoting NBN/NBS1 assembly at the sites of DNA damage. The NuA4 complex plays a key role in hematopoietic stem cell maintenance and is required to maintain acetylated H2A.Z/H2AZ1 at MYC target genes. The NuA4 complex is also required for spermatid development by promoting acetylation of histones: histone hyperacetylation is required for histone replacement during the transition from round to elongating spermatids. Component of a SWR1-like complex that specifically mediates the removal of histone H2A.Z/H2AZ1 from the nucleosome. Also acetylates non-histone proteins, such as BMAL1, ATM, AURKB, CHKA, CGAS, ERCC4/XPF, LPIN1, TP53/p53, NDC80/HEC1, NR1D2, RAN, SOX4, FOXP3, SQSTM1, ULK1 and RUBCNL/Pacer. Directly acetylates and activates ATM. Promotes nucleotide excision repair (NER) by mediating acetylation of ERCC4/XPF, thereby promoting formation of the ERCC4-ERCC1 complex. Relieves NR1D2-mediated inhibition of APOC3 expression by acetylating NR1D2. Acts as a regulator of regulatory T-cells (Treg) by catalyzing FOXP3 acetylation, thereby promoting FOXP3 transcriptional repressor activity. Involved in skeletal myoblast differentiation by mediating acetylation of SOX4. Catalyzes acetylation of APBB1/FE65, increasing its transcription activator activity. Promotes transcription elongation during the activation phase of the circadian cycle by catalyzing acetylation of BMAL1, promoting elongation of circadian transcripts. Together with GSK3 (GSK3A or GSK3B), acts as a regulator of autophagy: phosphorylated at Ser-86 by GSK3 under starvation conditions, leading to activate acetyltransferase activity and promote acetylation of key autophagy regulators, such as ULK1 and RUBCNL/Pacer. Acts as a regulator of the cGAS-STING innate antiviral response by catalyzing acetylation the N-terminus of CGAS, thereby promoting CGAS DNA-binding and activation. Also regulates lipid metabolism by mediating acetylation of CHKA or LPIN1. Promotes lipolysis of lipid droplets following glucose deprivation by mediating acetylation of isoform 1 of CHKA, thereby promoting monomerization of CHKA and its conversion into a tyrosine-protein kinase. Acts as a regulator of fatty-acid-induced triacylglycerol synthesis by catalyzing acetylation of LPIN1, thereby promoting the synthesis of diacylglycerol. In addition to protein acetyltransferase, can use different acyl-CoA substrates, such as (2E)-butenoyl-CoA (crotonyl-CoA), S-lactoyl-CoA (lactyl-CoA) and 2-hydroxyisobutanoyl-CoA (2-hydroxyisobutyryl-CoA), and is able to mediate protein crotonylation, lactylation and 2-hydroxyisobutyrylation, respectively. Acts as a key regulator of chromosome segregation and kinetochore-microtubule attachment during mitosis by mediating acetylation or crotonylation of target proteins. Catalyzes acetylation of AURKB at kinetochores, increasing AURKB activity and promoting accurate chromosome segregation in mitosis. Acetylates RAN during mitosis, promoting microtubule assembly at mitotic chromosomes. Acetylates NDC80/HEC1 during mitosis, promoting robust kinetochore-microtubule attachment. Catalyzes crotonylation of MAPRE1/EB1, thereby ensuring accurate spindle positioning in mitosis. Catalyzes lactylation of NBN/NBS1 in response to DNA damage, thereby promoting DNA double-strand breaks (DSBs) via homologous recombination (HR). (Microbial infection) Catalyzes the acetylation of flavivirus NS3 protein to modulate their RNA-binding and -unwinding activities leading to facilitate viral replication. In Homo sapiens (Human), this protein is Histone acetyltransferase KAT5.